Reading from the N-terminus, the 78-residue chain is Large ribosomal subunit protein bL28 (78 aa).

This sequence belongs to the bacterial ribosomal protein bL28 family.

The sequence is that of Large ribosomal subunit protein bL28 from Tropheryma whipplei (strain TW08/27) (Whipple's bacillus).